A 1586-amino-acid polypeptide reads, in one-letter code: Pentafunctional AROM polypeptide (1586 aa).

Positions Met1–Asn384 are 3-dehydroquinate synthase. NAD(+) contacts are provided by residues Asp44–Asn46, Glu81–Lys84, Gly114–Val116, and Asp119. Residue Arg130 coordinates 7-phospho-2-dehydro-3-deoxy-D-arabino-heptonate. NAD(+) is bound at residue Thr139 to Thr140. Residues Asp146 and Lys152 each contribute to the 7-phospho-2-dehydro-3-deoxy-D-arabino-heptonate site. Lys161 contributes to the NAD(+) binding site. Asn162 lines the 7-phospho-2-dehydro-3-deoxy-D-arabino-heptonate pocket. Residues Phe179 to Thr182 and Asn190 each bind NAD(+). Glu194 provides a ligand contact to Zn(2+). 7-phospho-2-dehydro-3-deoxy-D-arabino-heptonate is bound by residues Glu194–Lys197 and Lys250. The active-site Proton acceptor; for 3-dehydroquinate synthase activity is Glu260. 7-phospho-2-dehydro-3-deoxy-D-arabino-heptonate is bound by residues Arg264–Asn268 and His271. His271 is a binding site for Zn(2+). His275 (proton acceptor; for 3-dehydroquinate synthase activity) is an active-site residue. 7-phospho-2-dehydro-3-deoxy-D-arabino-heptonate is bound by residues His287 and Lys356. His287 is a binding site for Zn(2+). The EPSP synthase stretch occupies residues Val397–Val842. Cys824 serves as the catalytic For EPSP synthase activity. The shikimate kinase stretch occupies residues Ser864–Ser1056. Gly871–Thr878 contributes to the ATP binding site. The 3-dehydroquinase stretch occupies residues Leu1057 to Glu1277. The active-site Proton acceptor; for 3-dehydroquinate dehydratase activity is His1180. Residue Lys1208 is the Schiff-base intermediate with substrate; for 3-dehydroquinate dehydratase activity of the active site. Residues Ala1290–Phe1586 are shikimate dehydrogenase.

This sequence in the N-terminal section; belongs to the sugar phosphate cyclases superfamily. Dehydroquinate synthase family. The protein in the 2nd section; belongs to the EPSP synthase family. In the 3rd section; belongs to the shikimate kinase family. It in the 4th section; belongs to the type-I 3-dehydroquinase family. This sequence in the C-terminal section; belongs to the shikimate dehydrogenase family. Homodimer. It depends on Zn(2+) as a cofactor.

The protein resides in the cytoplasm. It catalyses the reaction 7-phospho-2-dehydro-3-deoxy-D-arabino-heptonate = 3-dehydroquinate + phosphate. It carries out the reaction 3-dehydroquinate = 3-dehydroshikimate + H2O. The catalysed reaction is shikimate + NADP(+) = 3-dehydroshikimate + NADPH + H(+). The enzyme catalyses shikimate + ATP = 3-phosphoshikimate + ADP + H(+). It catalyses the reaction 3-phosphoshikimate + phosphoenolpyruvate = 5-O-(1-carboxyvinyl)-3-phosphoshikimate + phosphate. It participates in metabolic intermediate biosynthesis; chorismate biosynthesis; chorismate from D-erythrose 4-phosphate and phosphoenolpyruvate: step 2/7. It functions in the pathway metabolic intermediate biosynthesis; chorismate biosynthesis; chorismate from D-erythrose 4-phosphate and phosphoenolpyruvate: step 3/7. Its pathway is metabolic intermediate biosynthesis; chorismate biosynthesis; chorismate from D-erythrose 4-phosphate and phosphoenolpyruvate: step 4/7. The protein operates within metabolic intermediate biosynthesis; chorismate biosynthesis; chorismate from D-erythrose 4-phosphate and phosphoenolpyruvate: step 5/7. It participates in metabolic intermediate biosynthesis; chorismate biosynthesis; chorismate from D-erythrose 4-phosphate and phosphoenolpyruvate: step 6/7. Functionally, the AROM polypeptide catalyzes 5 consecutive enzymatic reactions in prechorismate polyaromatic amino acid biosynthesis. The protein is Pentafunctional AROM polypeptide of Penicillium rubens (strain ATCC 28089 / DSM 1075 / NRRL 1951 / Wisconsin 54-1255) (Penicillium chrysogenum).